Reading from the N-terminus, the 766-residue chain is Single-minded homolog 1 (766 aa).

One can recognise a bHLH domain in the interval Met-1–Arg-53. PAS domains lie at Gly-77–His-147 and Pro-218–Gly-288. In terms of domain architecture, PAC spans Thr-292–Thr-335. The region spanning Glu-336 to Ser-766 is the Single-minded C-terminal domain. Residues Ala-353–Thr-365 show a composition bias toward polar residues. Disordered regions lie at residues Ala-353 to Asp-431, Trp-528 to Lys-563, and Ser-642 to Asn-662. Residues Arg-368–Tyr-387 carry the Nuclear localization signal motif. Residues Ser-373 to Ser-385 are compositionally biased toward low complexity. Residues His-394–Ser-404 are compositionally biased toward basic and acidic residues. A compositionally biased stretch (polar residues) spans Asp-649–Asn-662.

As to quaternary structure, efficient DNA binding requires dimerization with another bHLH protein. Heterodimer; forms a heterodimer with ARNT, ARNT2.

It localises to the nucleus. Its function is as follows. Transcriptional factor that may have pleiotropic effects during embryogenesis and in the adult. The chain is Single-minded homolog 1 (SIM1) from Pan troglodytes (Chimpanzee).